The chain runs to 223 residues: Voltage-dependent calcium channel gamma-1 subunit (223 aa).

Residues 1–10 (MSQTKTAKVR) are Cytoplasmic-facing. Residues 11–29 (VTLFFILAGGVLAMVAVVT) form a helical membrane-spanning segment. Residues 30–109 (DHWAVLSPHL…TQKEYSISAA (80 aa)) are Extracellular-facing. N-linked (GlcNAc...) asparagine glycans are attached at residues Asn43 and Asn80. Cys57 and Cys81 are oxidised to a cystine. A helical transmembrane segment spans residues 110–130 (AIAIFSLGFIIIGSICAFLSF). Over 131–135 (GNKRD) the chain is Cytoplasmic. Residues 136-156 (YLLRPASMFYAFAGLCLIVSV) traverse the membrane as a helical segment. Residues 157 to 180 (EVMRQSVKRMIDSEDTVWIEYYYS) lie on the Extracellular side of the membrane. A helical membrane pass occupies residues 181 to 205 (WSFACACAGFTLLFLGGLFLLLFSL). At 206–223 (PRMPQNPWESCMDTESEH) the chain is on the cytoplasmic side.

It belongs to the PMP-22/EMP/MP20 family. CACNG subfamily. In terms of assembly, component of a calcium channel complex consisting of a pore-forming alpha subunit (CACNA1S) and the ancillary subunits CACNB1 or CACNB2, CACNG1 and CACNA2D1. The channel complex contains alpha, beta, gamma and delta subunits in a 1:1:1:1 ratio, i.e. it contains either CACNB1 or CACNB2. In terms of processing, N-glycosylated. In terms of tissue distribution, skeletal muscle.

Its subcellular location is the cell membrane. It localises to the sarcolemma. Regulatory subunit of the voltage-gated calcium channel that gives rise to L-type calcium currents in skeletal muscle. Regulates channel inactivation kinetics. The protein is Voltage-dependent calcium channel gamma-1 subunit (Cacng1) of Rattus norvegicus (Rat).